Here is a 330-residue protein sequence, read N- to C-terminus: Phenylalanine--tRNA ligase alpha subunit (330 aa).

Glutamate 257 serves as a coordination point for Mg(2+).

This sequence belongs to the class-II aminoacyl-tRNA synthetase family. Phe-tRNA synthetase alpha subunit type 1 subfamily. In terms of assembly, tetramer of two alpha and two beta subunits. Mg(2+) serves as cofactor.

It localises to the cytoplasm. It catalyses the reaction tRNA(Phe) + L-phenylalanine + ATP = L-phenylalanyl-tRNA(Phe) + AMP + diphosphate + H(+). This Acaryochloris marina (strain MBIC 11017) protein is Phenylalanine--tRNA ligase alpha subunit.